A 757-amino-acid chain; its full sequence is Palmitoyltransferase AKR1 (757 aa).

Polar residues-rich tracts occupy residues 1–20 (MSDINTESGESTSLPNSTDP) and 36–46 (ESISSLQPIVS). The interval 1–54 (MSDINTESGESTSLPNSTDPPLSDVNIDVEDDDTAESISSLQPIVSNTTNPPEE) is disordered. Residues 1 to 307 (MSDINTESGE…KLFKKSDHAK (307 aa)) lie on the Cytoplasmic side of the membrane. ANK repeat units lie at residues 58-88 (PVLGQYHQACQKGDLATVKQLLDSGVLDLNT), 92-121 (GDITGLHWASINNRLSVVKYLISQGIDVNA), 126-155 (LEATPLHWAARYGYVHIVDCLLNKGADPTM), 159-188 (QGFNLLHLAVNSSNVMLVAYVLFFVVAKGI), 197-226 (KGRTPLLWAAYQGDSLSVMLLLKFGASTKI), and 230-259 (GGFTPLHWATVKGQPYVLTHLIRDGADFFL). The helical transmembrane segment at 308–328 (VITFFVPLVALSIIFILFTHL) threads the bilayer. Over 329–331 (HPL) the chain is Lumenal. Residues 332–352 (FALLISLIFGLAVNKALKELI) traverse the membrane as a helical segment. The Cytoplasmic segment spans residues 353-375 (LPSYSNYGLHSTSLLKSPFLSGT). Residues 376-396 (FFGSLLLLTIVWIFKIAPFTI) traverse the membrane as a helical segment. The Lumenal portion of the chain corresponds to 397–402 (FKSRLL). Residues 403 to 423 (TNFFMFLILMQIYYLFIKLIF) traverse the membrane as a helical segment. The Cytoplasmic segment spans residues 424-498 (SDPGCVPIET…YNDIGLKNHK (75 aa)). One can recognise a DHHC domain in the interval 455-505 (NFCLETWIRKPLRSHFSTLNTHNVARFDHFCPWIYNDIGLKNHKNFMWFIL). The active-site S-palmitoyl cysteine intermediate is the Cys-485. Residues 499-519 (NFMWFILLTEVGIWFFISLTM) form a helical membrane-spanning segment. Residues 520–550 (KYFDILEDTNEDVACFLLGDDELCAGFVYDR) are Lumenal-facing. Residues 551-571 (FTFLIALWALIQSVWVGFLIV) traverse the membrane as a helical segment. Over 572–757 (VQVFQTFTGV…YPEPTGPESV (186 aa)) the chain is Cytoplasmic. Residues 614–647 (ELRNDDDDTAASRTGNNPNHSNGTTIPSEGSRIN) form a disordered region. A compositionally biased stretch (polar residues) spans 624–646 (ASRTGNNPNHSNGTTIPSEGSRI).

It belongs to the DHHC palmitoyltransferase family. AKR/ZDHHC17 subfamily.

It localises to the early endosome membrane. Its subcellular location is the golgi apparatus membrane. The catalysed reaction is L-cysteinyl-[protein] + hexadecanoyl-CoA = S-hexadecanoyl-L-cysteinyl-[protein] + CoA. In terms of biological role, palmitoyltransferase specific for casein kinase 1. In Naumovozyma castellii (Yeast), this protein is Palmitoyltransferase AKR1 (AKR1).